The chain runs to 530 residues: Estrogen receptor beta (530 aa).

Residues 1–148 are modulating; sequence MDIKNSPSSL…GPSSKRDAHF (148 aa). The residue at position 61 (Ser61) is a Phosphoserine; alternate. Residue Ser61 is glycosylated (O-linked (GlcNAc) serine; alternate). 2 positions are modified to phosphoserine; by MAPK: Ser87 and Ser105. NR C4-type zinc fingers lie at residues 149-169 and 185-209; these read CAVCSDYASGYHYGVWSCEGC and CPATNQCTIDKNRRKSCQACRLRKC. The segment at residues 149 to 214 is a DNA-binding region (nuclear receptor); it reads CAVCSDYASG…RLRKCYEVGM (66 aa). Residues 264–498 form the NR LBD domain; sequence SPEQLVLTLL…DLLLEMMNAH (235 aa). The segment at 507–530 is disordered; the sequence is ITGSECSPAEDSKSTEGSQNPQSP. Over residues 521–530 the composition is skewed to polar residues; that stretch reads TEGSQNPQSP.

This sequence belongs to the nuclear hormone receptor family. NR3 subfamily. Binds DNA as a homodimer. Can form a heterodimer with ESR1. Interacts with NCOA1, NCOA3, NCOA5 and NCOA6 coactivators, leading to a strong increase of transcription of target genes. Interacts with UBE1C and AKAP13. Interacts with DNTTIP2. Interacts with CCDC62 in the presence of estradiol/E2; this interaction seems to enhance the transcription of target genes. Interacts with DNAAF4. Interacts with PRMT2. Interacts with CCAR2 (via N-terminus) in a ligand-independent manner. Interacts with RBM39, in the presence of estradiol (E2). Interacts with STUB1/CHIP. In terms of processing, phosphorylation at Ser-87 and Ser-105 recruits NCOA1.

Its subcellular location is the nucleus. In terms of biological role, nuclear hormone receptor. Binds estrogens with an affinity similar to that of ESR1/ER-alpha, and activates expression of reporter genes containing estrogen response elements (ERE) in an estrogen-dependent manner. This Callithrix jacchus (White-tufted-ear marmoset) protein is Estrogen receptor beta (ESR2).